The primary structure comprises 778 residues: DNA topoisomerase 1 (778 aa).

Residues 1 to 141 (MNSSDEEDIA…ETPEEDQGYK (141 aa)) form a disordered region. Over residues 17–26 (KSSSITSAST) the composition is skewed to low complexity. 2 stretches are compositionally biased toward basic and acidic residues: residues 71 to 83 (VKTE…EPKS) and 100 to 121 (EKTT…ESKT). The segment covering 122–131 (QSDSQASVKS) has biased composition (polar residues). Interaction with DNA stretches follow at residues 367 to 368 (KY), 430 to 435 (RAGGEK), and 522 to 524 (TAK). The Topo IB-type catalytic domain occupies 374–778 (NSSVKGQSDF…IESADENWRF (405 aa)). The active-site O-(3'-phospho-DNA)-tyrosine intermediate is Tyr-736.

This sequence belongs to the type IB topoisomerase family.

The catalysed reaction is ATP-independent breakage of single-stranded DNA, followed by passage and rejoining.. Releases the supercoiling and torsional tension of DNA introduced during the DNA replication and transcription by transiently cleaving and rejoining one strand of the DNA duplex. Introduces a single-strand break via transesterification at a target site in duplex DNA. The scissile phosphodiester is attacked by the catalytic tyrosine of the enzyme, resulting in the formation of a DNA-(3'-phosphotyrosyl)-enzyme intermediate and the expulsion of a 5'-OH DNA strand. The free DNA strand then rotates around the intact phosphodiester bond on the opposing strand, thus removing DNA supercoils. Finally, in the religation step, the DNA 5'-OH attacks the covalent intermediate to expel the active-site tyrosine and restore the DNA phosphodiester backbone. The chain is DNA topoisomerase 1 (TOP1) from Candida albicans (Yeast).